We begin with the raw amino-acid sequence, 272 residues long: MLELLQAVLLGAVQGLTEFLPVSSSGHLLLGQYFLGLDQDRFGLSFDVALHLGTLVAVVVFFRRDLLRMAGAFVRSLTRGRDLSEPDQRLAYLVLAATVPAALIGYLWEDFFETAVRSPWVVVFNLAFVGLLFLVAEAVGRKSRRAEKMGFAEAVGIGLAQAAALVPGVSRSGATITLGLLFGLRREEAARFSFLMSAPIIAGAGTLQLGEVLAEGMGAEQALMFAVGFLCSAVVGYLAIRFFISFVARYSLRAFAYYRFALAALVAALLLL.

7 helical membrane passes run 42-62 (FGLS…VVFF), 92-112 (YLVL…EDFF), 120-140 (WVVV…EAVG), 149-169 (MGFA…VPGV), 194-214 (FLMS…EVLA), 224-244 (MFAV…RFFI), and 252-272 (LRAF…LLLL).

The protein belongs to the UppP family.

It is found in the cell membrane. The enzyme catalyses di-trans,octa-cis-undecaprenyl diphosphate + H2O = di-trans,octa-cis-undecaprenyl phosphate + phosphate + H(+). Its function is as follows. Catalyzes the dephosphorylation of undecaprenyl diphosphate (UPP). Confers resistance to bacitracin. This chain is Undecaprenyl-diphosphatase, found in Rubrobacter xylanophilus (strain DSM 9941 / JCM 11954 / NBRC 16129 / PRD-1).